The chain runs to 182 residues: Dephospho-CoA kinase (182 aa).

The 179-residue stretch at 4–182 (VVAITGGIGS…IINNDHKIMT (179 aa)) folds into the DPCK domain. 12-17 (GSGKTT) is a binding site for ATP.

It belongs to the CoaE family.

Its subcellular location is the cytoplasm. The enzyme catalyses 3'-dephospho-CoA + ATP = ADP + CoA + H(+). It participates in cofactor biosynthesis; coenzyme A biosynthesis; CoA from (R)-pantothenate: step 5/5. Its function is as follows. Catalyzes the phosphorylation of the 3'-hydroxyl group of dephosphocoenzyme A to form coenzyme A. This is Dephospho-CoA kinase from Aliivibrio fischeri (strain ATCC 700601 / ES114) (Vibrio fischeri).